The sequence spans 234 residues: BTB/POZ domain-containing protein KCTD5 (234 aa).

An N-acetylalanine modification is found at Ala-2. A BTB domain is found at 44-146 (KWVRLNVGGT…LVKDKIRERD (103 aa)). The tract at residues 213-234 (PYGTTSEPSEKAKILQERGSRM) is disordered. Basic and acidic residues predominate over residues 220–234 (PSEKAKILQERGSRM).

Homopentamer. Interacts (via C-terminus) with GRASP55/GORASP2. Interacts with CUL3 and with ubiquitinated proteins. Interacts with CRY1.

It localises to the cytoplasm. Its subcellular location is the cytosol. The protein resides in the nucleus. Functionally, its interaction with CUL3 suggests that it may act as a substrate adapter in some E3 ligase complex. Does not affect the function of Kv channel Kv2.1/KCNB1, Kv1.2/KCNA2, Kv4.2/KCND2 and Kv3.4/KCNC4. This Mus musculus (Mouse) protein is BTB/POZ domain-containing protein KCTD5 (Kctd5).